The sequence spans 298 residues: Urease accessory protein UreD 3 (298 aa).

The tract at residues Met1–Ser30 is disordered.

This sequence belongs to the UreD family. UreD, UreF and UreG form a complex that acts as a GTP-hydrolysis-dependent molecular chaperone, activating the urease apoprotein by helping to assemble the nickel containing metallocenter of UreC. The UreE protein probably delivers the nickel.

It localises to the cytoplasm. In terms of biological role, required for maturation of urease via the functional incorporation of the urease nickel metallocenter. The protein is Urease accessory protein UreD 3 of Methylorubrum extorquens (strain PA1) (Methylobacterium extorquens).